A 464-amino-acid polypeptide reads, in one-letter code: Sugar transporter ERD6-like 1 (464 aa).

The next 12 membrane-spanning stretches (helical) occupy residues Ile23–Cys43, Val72–Gly92, Gln95–His115, Gly125–Ile145, Phe156–Phe176, Thr180–Pro200, Leu263–Ala283, Ile298–Val318, Leu326–Tyr346, Pro359–Leu379, Leu399–Met419, and Phe424–Leu444.

This sequence belongs to the major facilitator superfamily. Sugar transporter (TC 2.A.1.1) family.

The protein localises to the membrane. Its function is as follows. Sugar transporter. In Arabidopsis thaliana (Mouse-ear cress), this protein is Sugar transporter ERD6-like 1 (SUGTL4).